Here is a 469-residue protein sequence, read N- to C-terminus: 3-isopropylmalate dehydratase large subunit (469 aa).

[4Fe-4S] cluster contacts are provided by cysteine 347, cysteine 408, and cysteine 411.

This sequence belongs to the aconitase/IPM isomerase family. LeuC type 1 subfamily. In terms of assembly, heterodimer of LeuC and LeuD. Requires [4Fe-4S] cluster as cofactor.

The enzyme catalyses (2R,3S)-3-isopropylmalate = (2S)-2-isopropylmalate. The protein operates within amino-acid biosynthesis; L-leucine biosynthesis; L-leucine from 3-methyl-2-oxobutanoate: step 2/4. Functionally, catalyzes the isomerization between 2-isopropylmalate and 3-isopropylmalate, via the formation of 2-isopropylmaleate. The protein is 3-isopropylmalate dehydratase large subunit of Actinobacillus pleuropneumoniae serotype 5b (strain L20).